The sequence spans 316 residues: Pantothenate kinase (316 aa).

95-102 (GSVAVGKS) is a binding site for ATP.

Belongs to the prokaryotic pantothenate kinase family.

The protein localises to the cytoplasm. The enzyme catalyses (R)-pantothenate + ATP = (R)-4'-phosphopantothenate + ADP + H(+). The protein operates within cofactor biosynthesis; coenzyme A biosynthesis; CoA from (R)-pantothenate: step 1/5. The sequence is that of Pantothenate kinase from Enterobacter sp. (strain 638).